The following is a 337-amino-acid chain: Porphobilinogen deaminase (337 aa).

Cys254 is subject to S-(dipyrrolylmethanemethyl)cysteine.

It belongs to the HMBS family. The cofactor is dipyrromethane.

It catalyses the reaction 4 porphobilinogen + H2O = hydroxymethylbilane + 4 NH4(+). It functions in the pathway porphyrin-containing compound metabolism; protoporphyrin-IX biosynthesis; coproporphyrinogen-III from 5-aminolevulinate: step 2/4. Tetrapolymerization of the monopyrrole PBG into the hydroxymethylbilane pre-uroporphyrinogen in several discrete steps. The sequence is that of Porphobilinogen deaminase (pda-1) from Neurospora crassa (strain ATCC 24698 / 74-OR23-1A / CBS 708.71 / DSM 1257 / FGSC 987).